The chain runs to 160 residues: tRNA (cytidine(34)-2'-O)-methyltransferase (160 aa).

4 residues coordinate S-adenosyl-L-methionine: Leu-78, Gly-100, Ile-120, and Ser-128.

This sequence belongs to the class IV-like SAM-binding methyltransferase superfamily. RNA methyltransferase TrmH family. TrmL subfamily. As to quaternary structure, homodimer.

It localises to the cytoplasm. The enzyme catalyses cytidine(34) in tRNA + S-adenosyl-L-methionine = 2'-O-methylcytidine(34) in tRNA + S-adenosyl-L-homocysteine + H(+). It catalyses the reaction 5-carboxymethylaminomethyluridine(34) in tRNA(Leu) + S-adenosyl-L-methionine = 5-carboxymethylaminomethyl-2'-O-methyluridine(34) in tRNA(Leu) + S-adenosyl-L-homocysteine + H(+). Methylates the ribose at the nucleotide 34 wobble position in the two leucyl isoacceptors tRNA(Leu)(CmAA) and tRNA(Leu)(cmnm5UmAA). Catalyzes the methyl transfer from S-adenosyl-L-methionine to the 2'-OH of the wobble nucleotide. In Beijerinckia indica subsp. indica (strain ATCC 9039 / DSM 1715 / NCIMB 8712), this protein is tRNA (cytidine(34)-2'-O)-methyltransferase.